A 686-amino-acid chain; its full sequence is DNA ligase (686 aa).

NAD(+) contacts are provided by residues Asp-45–Asp-49, Ser-94–Leu-95, and Glu-127. Catalysis depends on Lys-129, which acts as the N6-AMP-lysine intermediate. Arg-150, Glu-187, Lys-302, and Lys-326 together coordinate NAD(+). Zn(2+) contacts are provided by Cys-420, Cys-423, Cys-438, and Cys-444. The BRCT domain maps to Leu-605–Ser-686.

Belongs to the NAD-dependent DNA ligase family. LigA subfamily. Mg(2+) serves as cofactor. It depends on Mn(2+) as a cofactor.

The catalysed reaction is NAD(+) + (deoxyribonucleotide)n-3'-hydroxyl + 5'-phospho-(deoxyribonucleotide)m = (deoxyribonucleotide)n+m + AMP + beta-nicotinamide D-nucleotide.. Functionally, DNA ligase that catalyzes the formation of phosphodiester linkages between 5'-phosphoryl and 3'-hydroxyl groups in double-stranded DNA using NAD as a coenzyme and as the energy source for the reaction. It is essential for DNA replication and repair of damaged DNA. This chain is DNA ligase, found in Psychrobacter sp. (strain PRwf-1).